Consider the following 1174-residue polypeptide: HEAT repeat-containing protein 6 (1174 aa).

The HEAT 1 repeat unit spans residues 168-207; it reads NELLGPTGILVNLCDPSQPDPELWREAIHCMANLCLGVPG. Disordered stretches follow at residues 304–346 and 373–392; these read GRSP…EELK and LGPQKSPLDPHQGQVGKDHF. Residues 323 to 335 are compositionally biased toward basic residues; the sequence is SKKKRKAGKQKKG. Residues 336 to 346 show a composition bias toward basic and acidic residues; the sequence is HQGEESKEELK. HEAT repeat units follow at residues 460–498, 523–560, and 566–603; these read GIGSPQSVSLMTIALKDSSPKTRACALQVLSAILDGSKQ, SIRELHRCLLLAIVAESSAQTLTQIIKCLANLVSNAPY, and GLLTRVWNQIKPYIRNKDVNVRVSSLTLLGAIVSAQVS. The interval 619-648 is disordered; that stretch reads SQNSGSATPSDPESNRKESMLEGGKKNGLH. Residues 631 to 648 show a composition bias toward basic and acidic residues; sequence ESNRKESMLEGGKKNGLH.

The protein is HEAT repeat-containing protein 6 (heatr6) of Xenopus laevis (African clawed frog).